The following is a 261-amino-acid chain: Cytochrome c oxidase subunit 3 (261 aa).

At 1-15 the chain is on the mitochondrial matrix side; the sequence is MAHQAHSYHMVDPSP. A helical transmembrane segment spans residues 16–34; that stretch reads WPIFGAAAALLTTSGLIMW. At 35 to 40 the chain is on the mitochondrial intermembrane side; that stretch reads FHYSST. The helical transmembrane segment at 41–66 threads the bilayer; it reads TLLTMGLLSMLLVMLQWWRDVVREST. Residues 67-72 are Mitochondrial matrix-facing; the sequence is FQGHHT. The chain crosses the membrane as a helical span at residues 73-105; that stretch reads PTVQKGLRYGMILFITSEAFFFLGFFWAFFHSS. At 106–128 the chain is on the mitochondrial intermembrane side; the sequence is LAPTPELGGQWPPTGVKPLNPLE. A helical membrane pass occupies residues 129-152; sequence VPLLNTAILLASGVTVTWAHHSIT. At 153–155 the chain is on the mitochondrial matrix side; it reads EGN. A helical transmembrane segment spans residues 156–183; the sequence is RKQAIHALTLTILLGFYFTALQAMEYHE. At 184–190 the chain is on the mitochondrial intermembrane side; the sequence is ASFSIAD. A helical transmembrane segment spans residues 191–223; it reads SVYGSTFFVATGFHGLHVIIGSSFLTVCLLRLI. The Mitochondrial matrix portion of the chain corresponds to 224-232; it reads KFHFTPNHH. The helical transmembrane segment at 233–256 threads the bilayer; that stretch reads FGFEAAAWYWHFVDIIWLFLYMSM. The Mitochondrial intermembrane segment spans residues 257 to 261; sequence YWWGS.

Belongs to the cytochrome c oxidase subunit 3 family. Component of the cytochrome c oxidase (complex IV, CIV), a multisubunit enzyme composed of 14 subunits. The complex is composed of a catalytic core of 3 subunits MT-CO1, MT-CO2 and MT-CO3, encoded in the mitochondrial DNA, and 11 supernumerary subunits COX4I, COX5A, COX5B, COX6A, COX6B, COX6C, COX7A, COX7B, COX7C, COX8 and NDUFA4, which are encoded in the nuclear genome. The complex exists as a monomer or a dimer and forms supercomplexes (SCs) in the inner mitochondrial membrane with NADH-ubiquinone oxidoreductase (complex I, CI) and ubiquinol-cytochrome c oxidoreductase (cytochrome b-c1 complex, complex III, CIII), resulting in different assemblies (supercomplex SCI(1)III(2)IV(1) and megacomplex MCI(2)III(2)IV(2)).

The protein localises to the mitochondrion inner membrane. It carries out the reaction 4 Fe(II)-[cytochrome c] + O2 + 8 H(+)(in) = 4 Fe(III)-[cytochrome c] + 2 H2O + 4 H(+)(out). Component of the cytochrome c oxidase, the last enzyme in the mitochondrial electron transport chain which drives oxidative phosphorylation. The respiratory chain contains 3 multisubunit complexes succinate dehydrogenase (complex II, CII), ubiquinol-cytochrome c oxidoreductase (cytochrome b-c1 complex, complex III, CIII) and cytochrome c oxidase (complex IV, CIV), that cooperate to transfer electrons derived from NADH and succinate to molecular oxygen, creating an electrochemical gradient over the inner membrane that drives transmembrane transport and the ATP synthase. Cytochrome c oxidase is the component of the respiratory chain that catalyzes the reduction of oxygen to water. Electrons originating from reduced cytochrome c in the intermembrane space (IMS) are transferred via the dinuclear copper A center (CU(A)) of subunit 2 and heme A of subunit 1 to the active site in subunit 1, a binuclear center (BNC) formed by heme A3 and copper B (CU(B)). The BNC reduces molecular oxygen to 2 water molecules using 4 electrons from cytochrome c in the IMS and 4 protons from the mitochondrial matrix. The sequence is that of Cytochrome c oxidase subunit 3 (MT-CO3) from Gallus gallus (Chicken).